Reading from the N-terminus, the 436-residue chain is Histidine--tRNA ligase (436 aa).

The protein belongs to the class-II aminoacyl-tRNA synthetase family.

The protein resides in the cytoplasm. It carries out the reaction tRNA(His) + L-histidine + ATP = L-histidyl-tRNA(His) + AMP + diphosphate + H(+). In Thermococcus kodakarensis (strain ATCC BAA-918 / JCM 12380 / KOD1) (Pyrococcus kodakaraensis (strain KOD1)), this protein is Histidine--tRNA ligase.